The chain runs to 583 residues: CD166 antigen (583 aa).

A signal peptide spans M1–G27. 2 consecutive Ig-like V-type domains span residues W28–N120 and P125–Y234. Topologically, residues W28–K527 are extracellular. Disulfide bonds link C43-C113 and C157-C220. Residues N95, N167, N265, N306, N361, N457, N480, and N499 are each glycosylated (N-linked (GlcNAc...) asparagine). 3 Ig-like C2-type domains span residues P245–T328, D333–T409, and P416–S501. Intrachain disulfides connect C270–C313, C354–C392, and C435–C485. A helical transmembrane segment spans residues L528–L549. The Cytoplasmic portion of the chain corresponds to Y550–A583. The interval N562 to A583 is disordered. Over residues E569–A583 the composition is skewed to basic and acidic residues.

As to quaternary structure, homodimer. Interacts (via extracellular domain) with CD6 (via extracellular domain). Homodimerization and interaction with CD6 involve the same region and cannot occur simultaneously. The affinity for CD6 is much higher than the affinity for self-association. Interacts (via glycosylated extracellular domain) with LGALS1 and LGALS3. Interaction with LGALS1 or LGALS3 inhibits interaction with CD6. The N-terminus is blocked. In terms of processing, glycosylated. As to expression, strongest expression in the lung, then brain, liver, and kidney. Present in the somatosensory system, basal ganglia, cortex, olfactory system, and circumventricular organs.

Its subcellular location is the cell membrane. The protein resides in the cell projection. The protein localises to the axon. It is found in the dendrite. Functionally, cell adhesion molecule that mediates both heterotypic cell-cell contacts via its interaction with CD6, as well as homotypic cell-cell contacts. Promotes T-cell activation and proliferation via its interactions with CD6. Contributes to the formation and maturation of the immunological synapse via its interactions with CD6. Mediates homotypic interactions with cells that express ALCAM. Mediates attachment of dendritic cells onto endothelial cells via homotypic interaction. Inhibits endothelial cell migration and promotes endothelial tube formation via homotypic interactions. Required for normal organization of the lymph vessel network. Required for normal hematopoietic stem cell engraftment in the bone marrow. Plays a role in hematopoiesis; required for normal numbers of hematopoietic stem cells in bone marrow. Promotes in vitro osteoblast proliferation and differentiation. Promotes neurite extension, axon growth and axon guidance; axons grow preferentially on surfaces that contain ALCAM. Mediates outgrowth and pathfinding for retinal ganglion cell axons. This is CD166 antigen (Alcam) from Rattus norvegicus (Rat).